The sequence spans 102 residues: Large ribosomal subunit protein bL21 (102 aa).

This sequence belongs to the bacterial ribosomal protein bL21 family. Part of the 50S ribosomal subunit. Contacts protein L20.

In terms of biological role, this protein binds to 23S rRNA in the presence of protein L20. The chain is Large ribosomal subunit protein bL21 from Bacillus anthracis (strain A0248).